A 259-amino-acid polypeptide reads, in one-letter code: Emerin (259 aa).

An N-acetylmethionine modification is found at Met1. The LEM domain maps to 1-45 (MDDYAVLSDTELAAVLRQYNIPHGPIVGSTRKLYEKKIFEYETQR). Residues Ser8, Ser29, Ser54, Ser72, Ser88, Ser99, Ser141, and Ser142 each carry the phosphoserine modification. The interval 46 to 223 (RRLLPPNSSS…PAAALGQDRQ (178 aa)) is interaction with F-actin. Phosphotyrosine is present on Tyr161. Residues 168-187 (RPISNVSRSSLGLSYYPTSS) form an interaction with CTNNB1 region. Phosphoserine occurs at positions 171, 174, and 176. Residues 224-244 (VPLWGQLLLFLVFAAFLLFVY) form a helical membrane-spanning segment.

As to quaternary structure, interacts with lamins A and C, BANF1, GMCL, BCLAF1 and YTHDC1/YT521. Interacts with TMEM43; the interaction retains emerin in the inner nuclear membrane. Interacts with ACTB, SPTAN1, F-actin, CTNNB1 and beta-tubulin. Interacts with SUN1 and SUN2. Interacts with TMEM201. Interacts with NEMP1. In terms of tissue distribution, in the ovary, highest expression is seen in primordial follicle oocytes (at protein level). Detected in embryonic fibroblasts, skeletal muscle, heart muscle and tongue epithelium (at protein level). Widely expressed.

The protein localises to the nucleus inner membrane. The protein resides in the nucleus outer membrane. In terms of biological role, stabilizes and promotes the formation of a nuclear actin cortical network. Stimulates actin polymerization in vitro by binding and stabilizing the pointed end of growing filaments. Inhibits beta-catenin activity by preventing its accumulation in the nucleus. Acts by influencing the nuclear accumulation of beta-catenin through a CRM1-dependent export pathway. Links centrosomes to the nuclear envelope via a microtubule association. Required for proper localization of non-farnesylated prelamin-A/C. Together with NEMP1, contributes to nuclear envelope stiffness in germ cells. The chain is Emerin (Emd) from Mus musculus (Mouse).